Consider the following 471-residue polypeptide: Collagenase 3 (471 aa).

Residues 1-19 (MHPGVLAAFLFLSWTHCRA) form the signal peptide. Residues 20–103 (LPLPSGGDED…PRCGVPDVGE (84 aa)) constitute a propeptide, activation peptide. Positions 94 to 101 (PRCGVPDV) match the Cysteine switch motif. C96 is a Zn(2+) binding site. N117 carries N-linked (GlcNAc...) asparagine glycosylation. A Ca(2+)-binding site is contributed by D128. Residue N152 is glycosylated (N-linked (GlcNAc...) asparagine). Ca(2+) is bound at residue D162. 2 residues coordinate Zn(2+): H172 and D174. The segment at 176 to 246 (YPFDGPSGLL…GALMFPIYTY (71 aa)) is interaction with TIMP2. Ca(2+) contacts are provided by D179, G180, S182, and L184. H187 contacts Zn(2+). N194, G196, and D198 together coordinate Ca(2+). H200 provides a ligand contact to Zn(2+). 3 residues coordinate Ca(2+): D202, D203, and E205. H222 serves as a coordination point for Zn(2+). E223 is an active-site residue. 3 residues coordinate Zn(2+): H226, H232, and M240. The tract at residues 263–284 (QSLYGPGDEDPNPKHPKTPDKC) is disordered. Residues 268–471 (PGDEDPNPKH…VMPANSILWC (204 aa)) are interaction with collagen. A compositionally biased stretch (basic and acidic residues) spans 273–284 (PNPKHPKTPDKC). Hemopexin repeat units lie at residues 281–330 (PDKC…WPEL), 331–377 (PNRI…GLPK), 379–427 (VKKI…FPGI), and 428–471 (GDKV…ILWC). A disulfide bond links C284 and C471. Ca(2+)-binding residues include D291, I293, D335, and A337. Y366 carries the post-translational modification Phosphotyrosine; by PKDCC. S383, A385, D432, and V434 together coordinate Ca(2+).

It belongs to the peptidase M10A family. As to quaternary structure, monomer. Interacts with TIMP1, TIMP2 and TIMP3. Binds (via the C-terminal region) to collagen. Ca(2+) serves as cofactor. It depends on Zn(2+) as a cofactor. Post-translationally, the proenzyme is activated by removal of the propeptide; this cleavage can be effected by other matrix metalloproteinases, such as MMP2, MMP3 and MMP14 and may involve several cleavage steps. Cleavage can also be autocatalytic, after partial maturation by another protease or after treatment with 4-aminophenylmercuric acetate (APMA) (in vitro). In terms of processing, N-glycosylated. Tyrosine phosphorylated by PKDCC/VLK. Detected in fetal cartilage and calvaria, in chondrocytes of hypertrophic cartilage in vertebrae and in the dorsal end of ribs undergoing ossification, as well as in osteoblasts and periosteal cells below the inner periosteal region of ossified ribs. Detected in chondrocytes from in joint cartilage that have been treated with TNF and IL1B, but not in untreated chondrocytes. Detected in T lymphocytes. Detected in breast carcinoma tissue.

It localises to the secreted. The protein localises to the extracellular space. The protein resides in the extracellular matrix. With respect to regulation, inhibited by TIMP1, TIMP2 and TIMP3. Inhibited by acetohydroxamic acid and other zinc chelators. Functionally, plays a role in the degradation of extracellular matrix proteins including fibrillar collagen, fibronectin, TNC and ACAN. Cleaves triple helical collagens, including type I, type II and type III collagen, but has the highest activity with soluble type II collagen. Can also degrade collagen type IV, type XIV and type X. May also function by activating or degrading key regulatory proteins, such as TGFB1 and CCN2. Plays a role in wound healing, tissue remodeling, cartilage degradation, bone development, bone mineralization and ossification. Required for normal embryonic bone development and ossification. Plays a role in the healing of bone fractures via endochondral ossification. Plays a role in wound healing, probably by a mechanism that involves proteolytic activation of TGFB1 and degradation of CCN2. Plays a role in keratinocyte migration during wound healing. May play a role in cell migration and in tumor cell invasion. The chain is Collagenase 3 (MMP13) from Homo sapiens (Human).